The primary structure comprises 145 residues: Large ribosomal subunit protein uL11 (145 aa).

This sequence belongs to the universal ribosomal protein uL11 family. In terms of assembly, part of the ribosomal stalk of the 50S ribosomal subunit. Interacts with L10 and the large rRNA to form the base of the stalk. L10 forms an elongated spine to which L12 dimers bind in a sequential fashion forming a multimeric L10(L12)X complex. One or more lysine residues are methylated.

In terms of biological role, forms part of the ribosomal stalk which helps the ribosome interact with GTP-bound translation factors. In Sulfurihydrogenibium sp. (strain YO3AOP1), this protein is Large ribosomal subunit protein uL11.